The sequence spans 132 residues: Large ribosomal subunit protein bL21 (132 aa).

The segment at 112 to 132 is disordered; it reads AEKPARKPRAKKTNEVTTDGA.

The protein belongs to the bacterial ribosomal protein bL21 family. Part of the 50S ribosomal subunit. Contacts protein L20.

Its function is as follows. This protein binds to 23S rRNA in the presence of protein L20. In Dehalococcoides mccartyi (strain ATCC BAA-2266 / KCTC 15142 / 195) (Dehalococcoides ethenogenes (strain 195)), this protein is Large ribosomal subunit protein bL21.